The sequence spans 270 residues: Putative hydro-lyase H16_B1759 (270 aa).

The protein belongs to the D-glutamate cyclase family.

The protein is Putative hydro-lyase H16_B1759 of Cupriavidus necator (strain ATCC 17699 / DSM 428 / KCTC 22496 / NCIMB 10442 / H16 / Stanier 337) (Ralstonia eutropha).